The sequence spans 603 residues: Outer envelope protein 64, mitochondrial (603 aa).

Residue serine 2 is modified to N-acetylserine. The helical transmembrane segment at 16–32 (KVWVVIGVTVAGIVILA) threads the bilayer. TPR repeat units lie at residues 488-521 (SEVM…NGAN), 523-555 (TYYC…DKKN), and 556-589 (VKAY…EPQN).

Expressed in roots and flower buds. Detected in leaves.

It localises to the mitochondrion outer membrane. In terms of biological role, chaperone receptor mediating Hsp90-dependent protein targeting to mitochondria. The chain is Outer envelope protein 64, mitochondrial (OM64) from Arabidopsis thaliana (Mouse-ear cress).